Here is a 276-residue protein sequence, read N- to C-terminus: Glutamate racemase (276 aa).

Residues 12–13 and 44–45 each bind substrate; these read DS and YG. Catalysis depends on Cys76, which acts as the Proton donor/acceptor. 77-78 contributes to the substrate binding site; the sequence is NT. Residue Cys187 is the Proton donor/acceptor of the active site. 188 to 189 serves as a coordination point for substrate; the sequence is TH.

This sequence belongs to the aspartate/glutamate racemases family.

The enzyme catalyses L-glutamate = D-glutamate. It participates in cell wall biogenesis; peptidoglycan biosynthesis. Functionally, provides the (R)-glutamate required for cell wall biosynthesis. This Granulibacter bethesdensis (strain ATCC BAA-1260 / CGDNIH1) protein is Glutamate racemase.